The primary structure comprises 84 residues: Large ribosomal subunit protein bL27 (84 aa).

The tract at residues Met-1–Leu-21 is disordered.

It belongs to the bacterial ribosomal protein bL27 family.

The protein is Large ribosomal subunit protein bL27 of Brachyspira hyodysenteriae (strain ATCC 49526 / WA1).